We begin with the raw amino-acid sequence, 317 residues long: 4-hydroxy-3-methylbut-2-enyl diphosphate reductase (317 aa).

Position 12 (C12) interacts with [4Fe-4S] cluster. (2E)-4-hydroxy-3-methylbut-2-enyl diphosphate contacts are provided by H41 and H74. Residues H41 and H74 each contribute to the dimethylallyl diphosphate site. H41 and H74 together coordinate isopentenyl diphosphate. C96 provides a ligand contact to [4Fe-4S] cluster. A (2E)-4-hydroxy-3-methylbut-2-enyl diphosphate-binding site is contributed by H124. H124 lines the dimethylallyl diphosphate pocket. Residue H124 participates in isopentenyl diphosphate binding. The active-site Proton donor is the E126. T169 contributes to the (2E)-4-hydroxy-3-methylbut-2-enyl diphosphate binding site. A [4Fe-4S] cluster-binding site is contributed by C199. Positions 227, 228, 229, and 271 each coordinate (2E)-4-hydroxy-3-methylbut-2-enyl diphosphate. Residues S227, S228, N229, and S271 each coordinate dimethylallyl diphosphate. Isopentenyl diphosphate-binding residues include S227, S228, N229, and S271.

Belongs to the IspH family. Requires [4Fe-4S] cluster as cofactor.

It catalyses the reaction isopentenyl diphosphate + 2 oxidized [2Fe-2S]-[ferredoxin] + H2O = (2E)-4-hydroxy-3-methylbut-2-enyl diphosphate + 2 reduced [2Fe-2S]-[ferredoxin] + 2 H(+). It carries out the reaction dimethylallyl diphosphate + 2 oxidized [2Fe-2S]-[ferredoxin] + H2O = (2E)-4-hydroxy-3-methylbut-2-enyl diphosphate + 2 reduced [2Fe-2S]-[ferredoxin] + 2 H(+). Its pathway is isoprenoid biosynthesis; dimethylallyl diphosphate biosynthesis; dimethylallyl diphosphate from (2E)-4-hydroxy-3-methylbutenyl diphosphate: step 1/1. It functions in the pathway isoprenoid biosynthesis; isopentenyl diphosphate biosynthesis via DXP pathway; isopentenyl diphosphate from 1-deoxy-D-xylulose 5-phosphate: step 6/6. Its function is as follows. Catalyzes the conversion of 1-hydroxy-2-methyl-2-(E)-butenyl 4-diphosphate (HMBPP) into a mixture of isopentenyl diphosphate (IPP) and dimethylallyl diphosphate (DMAPP). Acts in the terminal step of the DOXP/MEP pathway for isoprenoid precursor biosynthesis. In Vibrio parahaemolyticus serotype O3:K6 (strain RIMD 2210633), this protein is 4-hydroxy-3-methylbut-2-enyl diphosphate reductase.